Reading from the N-terminus, the 151-residue chain is MNRKEIENLINSYHWMVKEVRRLQRVLYGSVIPMKNWGVAQYGLEATMPKGSPGKSQAELRQMDMREERLFKRLKYYEERVYAVELGAEKIHGEQHKVIYDCMMEGMSYRAISLHLGISRETVRKMKDEFISQLCQDCHFERLLNLKKSVV.

It to B.subtilis pcf and to sigma factors.

This is an uncharacterized protein from Bacillus subtilis (strain 168).